Here is a 185-residue protein sequence, read N- to C-terminus: Casparian strip membrane protein 5 (185 aa).

The Cytoplasmic segment spans residues 1 to 25 (MKAEAVESGEASTIIAAPKRGINRG). The chain crosses the membrane as a helical span at residues 26–46 (ISIADLILRGVAAIGTFASAL). Topologically, residues 47–75 (TMGTTSETLTIFTQPIMIRAKYNDLPSLT) are extracellular. The helical transmembrane segment at 76-96 (FFVIANSIVCGYLVLSIPLSI) threads the bilayer. At 97-108 (SHFIRREARITR) the chain is on the cytoplasmic side. The chain crosses the membrane as a helical span at residues 109-129 (IILVIFDTAMVELLTAGASAA). At 130–160 (TVVVYLAHKRNANWLAICQQFNNFCERISGS) the chain is on the extracellular side. Residues 161 to 181 (LIGSFASIIMIMLIIITSAVA) form a helical membrane-spanning segment. The Cytoplasmic segment spans residues 182–185 (LSRH).

It belongs to the Casparian strip membrane proteins (CASP) family. As to quaternary structure, homodimer and heterodimers.

The protein localises to the cell membrane. In terms of biological role, regulates membrane-cell wall junctions and localized cell wall deposition. Required for establishment of the Casparian strip membrane domain (CSD) and the subsequent formation of Casparian strips, a cell wall modification of the root endodermis that determines an apoplastic barrier between the intraorganismal apoplasm and the extraorganismal apoplasm and prevents lateral diffusion. The polypeptide is Casparian strip membrane protein 5 (Populus trichocarpa (Western balsam poplar)).